Reading from the N-terminus, the 352-residue chain is Uroporphyrinogen decarboxylase (352 aa).

Substrate is bound by residues 26-30 (RQAGR), aspartate 76, tyrosine 153, serine 208, and histidine 323.

It belongs to the uroporphyrinogen decarboxylase family. Homodimer.

It is found in the cytoplasm. It carries out the reaction uroporphyrinogen III + 4 H(+) = coproporphyrinogen III + 4 CO2. It participates in porphyrin-containing compound metabolism; protoporphyrin-IX biosynthesis; coproporphyrinogen-III from 5-aminolevulinate: step 4/4. Catalyzes the decarboxylation of four acetate groups of uroporphyrinogen-III to yield coproporphyrinogen-III. The polypeptide is Uroporphyrinogen decarboxylase (Prochlorococcus marinus (strain NATL2A)).